The following is a 387-amino-acid chain: Large ribosomal subunit protein uL3 (387 aa).

The residue at position 24 (Ser24) is a Phosphoserine. Lys39 participates in a covalent cross-link: Glycyl lysine isopeptide (Lys-Gly) (interchain with G-Cter in ubiquitin). Phosphothreonine is present on Thr103. Lys136 participates in a covalent cross-link: Glycyl lysine isopeptide (Lys-Gly) (interchain with G-Cter in ubiquitin). Ser156 carries the post-translational modification Phosphoserine. His243 is modified (pros-methylhistidine). At Ser297 the chain carries Phosphoserine.

Belongs to the universal ribosomal protein uL3 family. Component of the large ribosomal subunit (LSU). Mature yeast ribosomes consist of a small (40S) and a large (60S) subunit. The 40S small subunit contains 1 molecule of ribosomal RNA (18S rRNA) and 33 different proteins (encoded by 57 genes). The large 60S subunit contains 3 rRNA molecules (25S, 5.8S and 5S rRNA) and 46 different proteins (encoded by 81 genes). uL3 forms together with ES39L one of the contact sites for the signal recognition particle that targets ribosomes to the endoplasmic reticulum membrane. In terms of processing, methylation at His-243 by HPM1 is required for proper 60S subunit assembly and promotes translational elongation fidelity.

The protein localises to the cytoplasm. Component of the ribosome, a large ribonucleoprotein complex responsible for the synthesis of proteins in the cell. The small ribosomal subunit (SSU) binds messenger RNAs (mRNAs) and translates the encoded message by selecting cognate aminoacyl-transfer RNA (tRNA) molecules. The large subunit (LSU) contains the ribosomal catalytic site termed the peptidyl transferase center (PTC), which catalyzes the formation of peptide bonds, thereby polymerizing the amino acids delivered by tRNAs into a polypeptide chain. The nascent polypeptides leave the ribosome through a tunnel in the LSU and interact with protein factors that function in enzymatic processing, targeting, and the membrane insertion of nascent chains at the exit of the ribosomal tunnel. uL3 plays a role in coordinating processes of accommodating the aminoacyl-tRNA in the PTC. The sequence is that of Large ribosomal subunit protein uL3 from Saccharomyces cerevisiae (strain ATCC 204508 / S288c) (Baker's yeast).